Here is a 121-residue protein sequence, read N- to C-terminus: Large ribosomal subunit protein uL14c (121 aa).

Belongs to the universal ribosomal protein uL14 family. In terms of assembly, part of the 50S ribosomal subunit.

Its subcellular location is the plastid. The protein localises to the chloroplast. Functionally, binds to 23S rRNA. This is Large ribosomal subunit protein uL14c from Guillardia theta (Cryptophyte).